Here is a 169-residue protein sequence, read N- to C-terminus: MSQLQQFCHNRFSWGLLLLSAIGLELAALFFQYGMDLAPCVMCIYIRVAVLGIILAALIGILQPKVWLLRLVGMAGWAVSAVWGFKLAYELNQMQVNPSPFATCSFYPEFPSFMPLDTWLPSVFSPTGMCSDSPWSWLSVSMAQWMMLGFAIYGVIWLLMLLPALKSAK.

Residues 1-13 (MSQLQQFCHNRFS) lie on the Cytoplasmic side of the membrane. The helical transmembrane segment at 14 to 30 (WGLLLLSAIGLELAALF) threads the bilayer. Over 31–48 (FQYGMDLAPCVMCIYIRV) the chain is Periplasmic. A disulfide bridge connects residues Cys-40 and Cys-43. The chain crosses the membrane as a helical span at residues 49–64 (AVLGIILAALIGILQP). The Cytoplasmic segment spans residues 65-71 (KVWLLRL). Residues 72 to 89 (VGMAGWAVSAVWGFKLAY) traverse the membrane as a helical segment. Topologically, residues 90–144 (ELNQMQVNPSPFATCSFYPEFPSFMPLDTWLPSVFSPTGMCSDSPWSWLSVSMAQ) are periplasmic. Cys-104 and Cys-130 are disulfide-bonded. The helical transmembrane segment at 145–163 (WMMLGFAIYGVIWLLMLLP) threads the bilayer. Topologically, residues 164-169 (ALKSAK) are cytoplasmic.

The protein belongs to the DsbB family.

The protein resides in the cell inner membrane. In terms of biological role, required for disulfide bond formation in some periplasmic proteins. Acts by oxidizing the DsbA protein. The polypeptide is Disulfide bond formation protein B (Shewanella frigidimarina (strain NCIMB 400)).